The sequence spans 636 residues: Chaperone protein DnaK (636 aa).

Phosphothreonine; by autocatalysis is present on threonine 203. The segment at 602–636 is disordered; it reads VYGKQQEGAPAQEEPSAEGKKADDEGTVEGEFREV. Residues 618–636 show a composition bias toward basic and acidic residues; sequence AEGKKADDEGTVEGEFREV.

Belongs to the heat shock protein 70 family.

Functionally, acts as a chaperone. This is Chaperone protein DnaK from Dehalococcoides mccartyi (strain CBDB1).